Here is a 369-residue protein sequence, read N- to C-terminus: Queuine tRNA-ribosyltransferase (369 aa).

Asp-89 acts as the Proton acceptor in catalysis. Residues 89-93 (DSGGF), Asp-143, Gln-187, and Gly-214 each bind substrate. The RNA binding stretch occupies residues 245 to 251 (GVGTPED). Residue Asp-264 is the Nucleophile of the active site. The interval 269 to 273 (TRNAR) is RNA binding; important for wobble base 34 recognition. Zn(2+)-binding residues include Cys-302, Cys-304, Cys-307, and His-333.

Belongs to the queuine tRNA-ribosyltransferase family. As to quaternary structure, homodimer. Within each dimer, one monomer is responsible for RNA recognition and catalysis, while the other monomer binds to the replacement base PreQ1. It depends on Zn(2+) as a cofactor.

The enzyme catalyses 7-aminomethyl-7-carbaguanine + guanosine(34) in tRNA = 7-aminomethyl-7-carbaguanosine(34) in tRNA + guanine. It participates in tRNA modification; tRNA-queuosine biosynthesis. Catalyzes the base-exchange of a guanine (G) residue with the queuine precursor 7-aminomethyl-7-deazaguanine (PreQ1) at position 34 (anticodon wobble position) in tRNAs with GU(N) anticodons (tRNA-Asp, -Asn, -His and -Tyr). Catalysis occurs through a double-displacement mechanism. The nucleophile active site attacks the C1' of nucleotide 34 to detach the guanine base from the RNA, forming a covalent enzyme-RNA intermediate. The proton acceptor active site deprotonates the incoming PreQ1, allowing a nucleophilic attack on the C1' of the ribose to form the product. After dissociation, two additional enzymatic reactions on the tRNA convert PreQ1 to queuine (Q), resulting in the hypermodified nucleoside queuosine (7-(((4,5-cis-dihydroxy-2-cyclopenten-1-yl)amino)methyl)-7-deazaguanosine). This chain is Queuine tRNA-ribosyltransferase, found in Dechloromonas aromatica (strain RCB).